A 1755-amino-acid chain; its full sequence is Transposon Ty1-PR1 Gag-Pol polyprotein (1755 aa).

Polar residues-rich tracts occupy residues 1 to 23 (MESQQLSQHSPISHGSACASVTS), 48 to 60 (TKANSQQTTTPAS), 71 to 93 (SPQTAQSHSPQNGPYPQQCMMTQ), and 127 to 152 (QSQFPQYPSSVGTPLSTPSPESGNTF). 3 disordered regions span residues 1–93 (MESQ…MMTQ), 126–173 (PQSQ…RPPP), and 352–421 (GSRN…SKST). Residues 153–165 (TDSSSADSDMTST) show a composition bias toward low complexity. An RNA-binding region spans residues 299–401 (NNGIHINNKV…NSKSKTARAH (103 aa)). Low complexity predominate over residues 402 to 418 (NVSTSNNSPSTDNDSIS). The residue at position 416 (Ser416) is a Phosphoserine. The For protease activity; shared with dimeric partner role is filled by Asp461. Positions 583-640 (NVHTSESTRKYPYPFIHRMLAHANAQTIRYSLKNNTITYFNESDVDWSSAIDYQCPDC) are integrase-type zinc finger-like. The region spanning 660 to 835 (NSYEPFQYLH…AGLDISTLLP (176 aa)) is the Integrase catalytic domain. The Mg(2+) site is built by Asp671 and Asp736. Disordered stretches follow at residues 956-1087 (SKAV…ETEK), 1092-1111 (RSPSIDASPPENNSSHNIVP), and 1130-1187 (DLPL…DNET). A compositionally biased stretch (low complexity) spans 960-969 (SPTDSTPPST). Positions 1005 to 1015 (STPQISNIEST) are enriched in polar residues. Over residues 1038-1053 (ESSHASKSKDFRHSDS) the composition is skewed to basic and acidic residues. 2 stretches are compositionally biased toward polar residues: residues 1054–1082 (YSENETNHTNVPISSTGGTNNKTVPQISD) and 1101–1111 (PENNSSHNIVP). The Bipartite nuclear localization signal signature appears at 1178-1212 (KKRSLEDNETEIKVSRDTWNTKNMRSLEPPRSKKR). In terms of domain architecture, Reverse transcriptase Ty1/copia-type spans 1338-1476 (NNYYITQLDI…DILGLEIKYQ (139 aa)). Asp1346, Asp1427, Asp1428, Asp1610, Glu1652, and Asp1685 together coordinate Mg(2+). The RNase H Ty1/copia-type domain maps to 1610 to 1752 (DASYGNQPYY…IKTFKLLTNK (143 aa)).

As to quaternary structure, the capsid protein forms a homotrimer, from which the VLPs are assembled. The protease is a homodimer, whose active site consists of two apposed aspartic acid residues. Post-translationally, initially, virus-like particles (VLPs) are composed of the structural unprocessed proteins Gag and Gag-Pol, and also contain the host initiator methionine tRNA (tRNA(i)-Met) which serves as a primer for minus-strand DNA synthesis, and a dimer of genomic Ty RNA. Processing of the polyproteins occurs within the particle and proceeds by an ordered pathway, called maturation. First, the protease (PR) is released by autocatalytic cleavage of the Gag-Pol polyprotein yielding capsid protein p45 and a Pol-p154 precursor protein. This cleavage is a prerequisite for subsequent processing of Pol-p154 at the remaining sites to release the mature structural and catalytic proteins. Maturation takes place prior to the RT reaction and is required to produce transposition-competent VLPs.

Its subcellular location is the cytoplasm. It localises to the nucleus. The enzyme catalyses DNA(n) + a 2'-deoxyribonucleoside 5'-triphosphate = DNA(n+1) + diphosphate. It catalyses the reaction Endonucleolytic cleavage to 5'-phosphomonoester.. Functionally, capsid protein (CA) is the structural component of the virus-like particle (VLP), forming the shell that encapsulates the retrotransposons dimeric RNA genome. The particles are assembled from trimer-clustered units and there are holes in the capsid shells that allow for the diffusion of macromolecules. CA also has nucleocapsid-like chaperone activity, promoting primer tRNA(i)-Met annealing to the multipartite primer-binding site (PBS), dimerization of Ty1 RNA and initiation of reverse transcription. The aspartyl protease (PR) mediates the proteolytic cleavages of the Gag and Gag-Pol polyproteins after assembly of the VLP. In terms of biological role, reverse transcriptase/ribonuclease H (RT) is a multifunctional enzyme that catalyzes the conversion of the retro-elements RNA genome into dsDNA within the VLP. The enzyme displays a DNA polymerase activity that can copy either DNA or RNA templates, and a ribonuclease H (RNase H) activity that cleaves the RNA strand of RNA-DNA heteroduplexes during plus-strand synthesis and hydrolyzes RNA primers. The conversion leads to a linear dsDNA copy of the retrotransposon that includes long terminal repeats (LTRs) at both ends. Its function is as follows. Integrase (IN) targets the VLP to the nucleus, where a subparticle preintegration complex (PIC) containing at least integrase and the newly synthesized dsDNA copy of the retrotransposon must transit the nuclear membrane. Once in the nucleus, integrase performs the integration of the dsDNA into the host genome. In Saccharomyces cerevisiae (strain ATCC 204508 / S288c) (Baker's yeast), this protein is Transposon Ty1-PR1 Gag-Pol polyprotein (TY1B-PR1).